A 291-amino-acid chain; its full sequence is N-acetylmannosamine kinase (291 aa).

Residues 5–12 (AIDIGGTK) and 132–139 (GVGGGVVC) contribute to the ATP site. Residues His156, Cys166, Cys168, and Cys173 each contribute to the Zn(2+) site.

It belongs to the ROK (NagC/XylR) family. NanK subfamily. In terms of assembly, homodimer.

It catalyses the reaction an N-acyl-D-mannosamine + ATP = an N-acyl-D-mannosamine 6-phosphate + ADP + H(+). It participates in amino-sugar metabolism; N-acetylneuraminate degradation; D-fructose 6-phosphate from N-acetylneuraminate: step 2/5. Catalyzes the phosphorylation of N-acetylmannosamine (ManNAc) to ManNAc-6-P. This chain is N-acetylmannosamine kinase, found in Salmonella paratyphi A (strain ATCC 9150 / SARB42).